We begin with the raw amino-acid sequence, 355 residues long: uncharacterized protein (355 aa).

Residues 9–75 form the J domain; it reads DYYDILNISV…KLREKYDKLG (67 aa).

This sequence belongs to the DnaJ family.

It localises to the cytoplasm. This is an uncharacterized protein from Schizosaccharomyces pombe (strain 972 / ATCC 24843) (Fission yeast).